A 697-amino-acid chain; its full sequence is Portal protein (697 aa).

The interval 633–697 is disordered; it reads MSREAAGGVP…RRAGGPYGFH (65 aa). Basic and acidic residues predominate over residues 664–689; it reads ITADEERRGPERVGRFRNGGPDDPRR.

This sequence belongs to the herpesviridae portal protein family. Homododecamerizes. Interacts with terminase subunits TRM1 and TRM3.

The protein resides in the virion. It is found in the host nucleus. Functionally, forms a portal in the viral capsid through which viral DNA is translocated during DNA packaging. Assembles as a dodecamer at a single fivefold axe of the T=16 icosahedric capsid. Binds to the molecular motor that translocates the viral DNA, termed terminase. This Homo sapiens (Human) protein is Portal protein (UL104).